A 637-amino-acid polypeptide reads, in one-letter code: Early transcription factor 70 kDa subunit (637 aa).

The Helicase ATP-binding domain maps to 32–185 (RTIIDENRSV…GHIIDLMSEE (154 aa)). Residue 45 to 52 (HIMGSGKT) coordinates ATP. The DEXH box motif lies at 135–138 (DEAH). Residues 327-507 (KFKYFINRIQ…VLPFDIKKLL (181 aa)) enclose the Helicase C-terminal domain.

It belongs to the helicase family. VETF subfamily. In terms of assembly, heterodimer of a 70 kDa and a 82 kDa subunit. Part of the early transcription complex composed of ETF, RAP94/OPG109, and the DNA-directed RNA polymerase.

The protein resides in the virion. In terms of biological role, acts with RNA polymerase to initiate transcription from early gene promoters. Is recruited by the RPO-associated protein of 94 kDa RAP94/OPG109 to form the early transcription complex, which also contains the core RNA polymerase. ETF heterodimer binds to early gene promoters. The protein is Early transcription factor 70 kDa subunit (OPG118) of Vaccinia virus (strain Ankara) (VACV).